A 435-amino-acid chain; its full sequence is ATP-dependent protease ATPase subunit HslU (435 aa).

ATP contacts are provided by residues I18, 60 to 65 (GVGKTE), D248, E313, and R385.

The protein belongs to the ClpX chaperone family. HslU subfamily. A double ring-shaped homohexamer of HslV is capped on each side by a ring-shaped HslU homohexamer. The assembly of the HslU/HslV complex is dependent on binding of ATP.

It is found in the cytoplasm. ATPase subunit of a proteasome-like degradation complex; this subunit has chaperone activity. The binding of ATP and its subsequent hydrolysis by HslU are essential for unfolding of protein substrates subsequently hydrolyzed by HslV. HslU recognizes the N-terminal part of its protein substrates and unfolds these before they are guided to HslV for hydrolysis. This Agrobacterium fabrum (strain C58 / ATCC 33970) (Agrobacterium tumefaciens (strain C58)) protein is ATP-dependent protease ATPase subunit HslU.